Here is a 296-residue protein sequence, read N- to C-terminus: MSDKHINLVIVTGMSGAGKTVAIQSFEDLGYFTIDNMPPALVPKFLELIEQTNENRRVALVVDMRSRLFFKEINSTLDSIESNPSIDFRILFLDATDGELVSRYKETRRSHPLAADGRVLDGIRLERELLSPLKSMSQHVVDTTKLTPRQLRKTISDQFSEGSNQASFRIEVMSFGFKYGLPLDADLVFDVRFLPNPYYQVELREKTGLDEDVFNYVMSHPESEVFYKHLLNLIVPILPAYQKEGKSVLTVAIGCTGGQHRSVAFAHCLAESLATDWSVNESHRDQNRRKETVNRS.

ATP is bound at residue 13–20; sequence GMSGAGKT. 63 to 66 contacts GTP; the sequence is DMRS.

This sequence belongs to the RapZ-like family.

Functionally, displays ATPase and GTPase activities. The protein is Nucleotide-binding protein Spy49_0545 of Streptococcus pyogenes serotype M49 (strain NZ131).